Consider the following 434-residue polypeptide: Alpha-enolase (434 aa).

Ser-2 bears the N-acetylserine mark. At Lys-5 the chain carries N6-acetyllysine. Position 27 is a phosphoserine (Ser-27). Position 40 (Ser-40) interacts with Mg(2+). Tyr-44 is modified (phosphotyrosine). Lys-60 carries the N6-acetyllysine; alternate modification. Position 60 is an N6-succinyllysine; alternate (Lys-60). Lys-64 and Lys-71 each carry N6-acetyllysine. The residue at position 89 (Lys-89) is an N6-acetyllysine; alternate. Residue Lys-89 is modified to N6-succinyllysine; alternate. An N6-acetyllysine mark is found at Lys-92 and Lys-126. 2 residues coordinate substrate: His-158 and Glu-167. An N6-acetyllysine mark is found at Lys-193 and Lys-199. Residue Lys-202 is modified to N6-acetyllysine; alternate. A Glycyl lysine isopeptide (Lys-Gly) (interchain with G-Cter in SUMO2); alternate cross-link involves residue Lys-202. Glu-210 (proton donor) is an active-site residue. 2 positions are modified to N6-acetyllysine; alternate: Lys-228 and Lys-233. Lys-228 carries the N6-succinyllysine; alternate modification. Lys-228 is modified (N6-(2-hydroxyisobutyryl)lysine; alternate). Position 233 is an N6-malonyllysine; alternate (Lys-233). Asp-245 lines the Mg(2+) pocket. Ser-254 is modified (phosphoserine). The residue at position 256 (Lys-256) is an N6-acetyllysine. Residues Ser-263 and Ser-272 each carry the phosphoserine modification. Lys-281 is modified (N6-acetyllysine; alternate). Lys-281 carries the post-translational modification N6-(2-hydroxyisobutyryl)lysine; alternate. N6-acetyllysine is present on Lys-285. Tyr-287 is subject to Phosphotyrosine. Ser-291 is subject to Phosphoserine. Positions 293 and 318 each coordinate Mg(2+). Positions 293 and 318 each coordinate substrate. N6-acetyllysine is present on residues Lys-335 and Lys-343. Residue Lys-343 is the Proton acceptor of the active site. Substrate contacts are provided by residues Ser-370–Ser-373 and Lys-394. Residues Ala-405–Lys-434 form a required for interaction with PLG region. Lys-406 bears the N6-acetyllysine mark. An N6-acetyllysine; alternate modification is found at Lys-420. Lys-420 is subject to N6-succinyllysine; alternate. Lys-420 carries the post-translational modification N6-malonyllysine; alternate.

Belongs to the enolase family. As to quaternary structure, mammalian enolase is composed of 3 isozyme subunits, alpha, beta and gamma, which can form homodimers or heterodimers which are cell-type and development-specific. ENO1 interacts with PLG in the neuronal plasma membrane and promotes its activation. The C-terminal lysine is required for this binding. Interacts with ENO4 and PGAM2. Interacts with CMTM6. The cofactor is Mg(2+). In terms of processing, ISGylated. Lysine 2-hydroxyisobutyrylation (Khib) by p300/EP300 activates the phosphopyruvate hydratase activity.

It localises to the cytoplasm. The protein resides in the cell membrane. It carries out the reaction (2R)-2-phosphoglycerate = phosphoenolpyruvate + H2O. It participates in carbohydrate degradation; glycolysis; pyruvate from D-glyceraldehyde 3-phosphate: step 4/5. Its function is as follows. Glycolytic enzyme the catalyzes the conversion of 2-phosphoglycerate to phosphoenolpyruvate. In addition to glycolysis, involved in various processes such as growth control, hypoxia tolerance and allergic responses. May also function in the intravascular and pericellular fibrinolytic system due to its ability to serve as a receptor and activator of plasminogen on the cell surface of several cell-types such as leukocytes and neurons. Stimulates immunoglobulin production. The polypeptide is Alpha-enolase (ENO1) (Pongo abelii (Sumatran orangutan)).